The following is a 335-amino-acid chain: Ketol-acid reductoisomerase (NADP(+)) (335 aa).

A KARI N-terminal Rossmann domain is found at Val-2–Thr-182. NADP(+) contacts are provided by residues Tyr-25–Gln-28, Arg-48, Ser-51, and Asp-83–Gln-86. Residue His-108 is part of the active site. Residue Gly-134 participates in NADP(+) binding. The 146-residue stretch at Thr-183–Leu-328 folds into the KARI C-terminal knotted domain. Mg(2+) contacts are provided by Asp-191, Glu-195, Glu-227, and Glu-231. Ser-252 serves as a coordination point for substrate.

Belongs to the ketol-acid reductoisomerase family. It depends on Mg(2+) as a cofactor.

It carries out the reaction (2R)-2,3-dihydroxy-3-methylbutanoate + NADP(+) = (2S)-2-acetolactate + NADPH + H(+). It catalyses the reaction (2R,3R)-2,3-dihydroxy-3-methylpentanoate + NADP(+) = (S)-2-ethyl-2-hydroxy-3-oxobutanoate + NADPH + H(+). The protein operates within amino-acid biosynthesis; L-isoleucine biosynthesis; L-isoleucine from 2-oxobutanoate: step 2/4. Its pathway is amino-acid biosynthesis; L-valine biosynthesis; L-valine from pyruvate: step 2/4. Functionally, involved in the biosynthesis of branched-chain amino acids (BCAA). Catalyzes an alkyl-migration followed by a ketol-acid reduction of (S)-2-acetolactate (S2AL) to yield (R)-2,3-dihydroxy-isovalerate. In the isomerase reaction, S2AL is rearranged via a Mg-dependent methyl migration to produce 3-hydroxy-3-methyl-2-ketobutyrate (HMKB). In the reductase reaction, this 2-ketoacid undergoes a metal-dependent reduction by NADPH to yield (R)-2,3-dihydroxy-isovalerate. The polypeptide is Ketol-acid reductoisomerase (NADP(+)) (Methanococcoides burtonii (strain DSM 6242 / NBRC 107633 / OCM 468 / ACE-M)).